We begin with the raw amino-acid sequence, 260 residues long: Kallikrein-8 (260 aa).

Positions 1–28 are cleaved as a signal peptide; that stretch reads MGRPPPCAIQTWILLFLLMGAWAGLTRA. The propeptide occupies 29–32; that stretch reads QGSK. The 225-residue stretch at 33 to 257 folds into the Peptidase S1 domain; the sequence is ILEGQECKPH…YTNWIKKTMG (225 aa). Cystine bridges form between cysteine 39–cysteine 173, cysteine 58–cysteine 74, cysteine 145–cysteine 246, cysteine 152–cysteine 218, cysteine 184–cysteine 198, and cysteine 208–cysteine 233. Histidine 73 serves as the catalytic Charge relay system. N-linked (GlcNAc...) asparagine glycosylation occurs at asparagine 110. Aspartate 120 functions as the Charge relay system in the catalytic mechanism. The active-site Charge relay system is serine 212.

It belongs to the peptidase S1 family. Kallikrein subfamily. In terms of assembly, interacts with SPINK9. As to expression, restricted to hippocampus.

The protein resides in the secreted. It is found in the cytoplasm. It catalyses the reaction Cleavage of amide substrates following the basic amino acids Arg or Lys at the P1 position, with a preference for Arg over Lys.. In terms of biological role, serine protease which is capable of degrading a number of proteins such as casein, fibrinogen, kininogen, fibronectin and collagen type IV. Also cleaves L1CAM in response to increased neural activity. Induces neurite outgrowth and fasciculation of cultured hippocampal neurons. Plays a role in the formation and maturation of orphan and small synaptic boutons in the Schaffer-collateral pathway, regulates Schaffer-collateral long-term potentiation in the hippocampus and is required for memory acquisition and synaptic plasticity. Involved in skin desquamation and keratinocyte proliferation. Plays a role in the secondary phase of pathogenesis following spinal cord injury. The polypeptide is Kallikrein-8 (Klk8) (Rattus norvegicus (Rat)).